The chain runs to 117 residues: MNEKIRNFESNQMKKDIPPLHPGDVVEISLWIIEGNKKRFQIFEGMIIAIKNRGLNSAFTVRKISSGEGVERVFQIHSPVIKEINIKKIGVVRRAKLYYLRNLKGKSARIKTRLHVN.

The protein belongs to the bacterial ribosomal protein bL19 family.

Functionally, this protein is located at the 30S-50S ribosomal subunit interface and may play a role in the structure and function of the aminoacyl-tRNA binding site. The chain is Large ribosomal subunit protein bL19 from Blochmanniella floridana.